Reading from the N-terminus, the 557-residue chain is Formate--tetrahydrofolate ligase 2 (557 aa).

66–73 (TPAGEGKT) lines the ATP pocket.

The protein belongs to the formate--tetrahydrofolate ligase family.

It carries out the reaction (6S)-5,6,7,8-tetrahydrofolate + formate + ATP = (6R)-10-formyltetrahydrofolate + ADP + phosphate. It functions in the pathway one-carbon metabolism; tetrahydrofolate interconversion. In Streptococcus pyogenes serotype M28 (strain MGAS6180), this protein is Formate--tetrahydrofolate ligase 2.